We begin with the raw amino-acid sequence, 323 residues long: MSVRSLYGISGLRISTRTFSKTAFRLQEQVNQTQESTDTEINGRPLVPANLKNAKGERLMIPSKLQENALRNYELERLRIIPKLNTFYGGNPVHEENLNTLNGLIRKYINLPTRIVDDKEIQNTKFVSFEEYKTRIQSGTRLKPIHHKELTQLLHRLRSIDPELMPREVSDVLAKFANTSSESAKAAQKVKTLDEFGRAISLGKRKRSVAKVYLTKGDGQVMVNGKSLLEYFPKEADRRRIAYPFQVVSQEGQYNVFAEVQSGGSTGQAEAVMYGIAKDLVIFNPLLKSRLHKSGLMTRDARKVERKKPGKVKARKSPTWVKR.

The interval 298–323 (TRDARKVERKKPGKVKARKSPTWVKR) is disordered. A compositionally biased stretch (basic residues) spans 304-323 (VERKKPGKVKARKSPTWVKR).

This sequence belongs to the universal ribosomal protein uS9 family.

Its subcellular location is the mitochondrion. This chain is Small ribosomal subunit protein uS9m (MRPS9), found in Debaryomyces hansenii (strain ATCC 36239 / CBS 767 / BCRC 21394 / JCM 1990 / NBRC 0083 / IGC 2968) (Yeast).